A 101-amino-acid chain; its full sequence is Small ribosomal subunit protein uS14 (101 aa).

This sequence belongs to the universal ribosomal protein uS14 family. Part of the 30S ribosomal subunit. Contacts proteins S3 and S10.

Functionally, binds 16S rRNA, required for the assembly of 30S particles and may also be responsible for determining the conformation of the 16S rRNA at the A site. The protein is Small ribosomal subunit protein uS14 of Neisseria meningitidis serogroup C / serotype 2a (strain ATCC 700532 / DSM 15464 / FAM18).